A 426-amino-acid polypeptide reads, in one-letter code: Glutamate-1-semialdehyde 2,1-aminomutase (426 aa).

Lys265 bears the N6-(pyridoxal phosphate)lysine mark.

It belongs to the class-III pyridoxal-phosphate-dependent aminotransferase family. HemL subfamily. As to quaternary structure, homodimer. It depends on pyridoxal 5'-phosphate as a cofactor.

It localises to the cytoplasm. The catalysed reaction is (S)-4-amino-5-oxopentanoate = 5-aminolevulinate. It functions in the pathway porphyrin-containing compound metabolism; protoporphyrin-IX biosynthesis; 5-aminolevulinate from L-glutamyl-tRNA(Glu): step 2/2. The chain is Glutamate-1-semialdehyde 2,1-aminomutase from Pectobacterium carotovorum subsp. carotovorum (strain PC1).